Here is a 514-residue protein sequence, read N- to C-terminus: Peptide chain release factor 3 (514 aa).

Positions 8–268 (KKRRTFAIIS…TFLEFAPEPH (261 aa)) constitute a tr-type G domain. GTP is bound by residues 17–24 (SHPDAGKT), 85–89 (DTPGH), and 139–142 (NKLD).

This sequence belongs to the TRAFAC class translation factor GTPase superfamily. Classic translation factor GTPase family. PrfC subfamily.

Its subcellular location is the cytoplasm. Its function is as follows. Increases the formation of ribosomal termination complexes and stimulates activities of RF-1 and RF-2. It binds guanine nucleotides and has strong preference for UGA stop codons. It may interact directly with the ribosome. The stimulation of RF-1 and RF-2 is significantly reduced by GTP and GDP, but not by GMP. This is Peptide chain release factor 3 from Streptococcus pyogenes serotype M28 (strain MGAS6180).